The chain runs to 101 residues: UPF0473 protein LAF_0524 (101 aa).

Belongs to the UPF0473 family.

The polypeptide is UPF0473 protein LAF_0524 (Limosilactobacillus fermentum (strain NBRC 3956 / LMG 18251) (Lactobacillus fermentum)).